The primary structure comprises 568 residues: PWWP domain-containing protein2 (568 aa).

A compositionally biased stretch (basic and acidic residues) spans 1 to 19 (MTEIKDSSVKDENPGKQEE). Disordered regions lie at residues 1 to 126 (MTEI…YKPG), 213 to 340 (QSTP…DVAK), and 465 to 568 (IASL…TGQK). Positions 29-46 (MSTATNNSKNIETTSSNG) are enriched in polar residues. Composition is skewed to basic and acidic residues over residues 48-88 (EDIK…KTIE) and 100-122 (KSQKSEKSNGNARKETKQSERVN). The PWWP domain occupies 125–189 (PGMRVLTKMS…SDSLTPLTSE (65 aa)). Low complexity predominate over residues 214–228 (STPDLDSLSVPSSES). A compositionally biased stretch (acidic residues) spans 229–249 (EVSEEESDQEMSEPSPIEEDY). The segment covering 255 to 266 (RRITRKGTKKKT) has biased composition (basic residues). A compositionally biased stretch (polar residues) spans 281 to 292 (LNASSNVSSNPA). A compositionally biased stretch (acidic residues) spans 325–336 (KEEEEGSVANEE). 2 stretches are compositionally biased toward basic and acidic residues: residues 489–500 (KQNEDNEDKVKA) and 514–541 (DASKDMISEEKSSKDADNSLEVAGKDFA).

The chain is PWWP domain-containing protein2 (pdp2) from Schizosaccharomyces pombe (strain 972 / ATCC 24843) (Fission yeast).